Reading from the N-terminus, the 217-residue chain is Ribosomal RNA small subunit methyltransferase G (217 aa).

S-adenosyl-L-methionine contacts are provided by residues glycine 85, leucine 90, 135-136 (IE), and arginine 149.

This sequence belongs to the methyltransferase superfamily. RNA methyltransferase RsmG family.

The protein localises to the cytoplasm. The enzyme catalyses guanosine(527) in 16S rRNA + S-adenosyl-L-methionine = N(7)-methylguanosine(527) in 16S rRNA + S-adenosyl-L-homocysteine. Functionally, specifically methylates the N7 position of guanine in position 527 of 16S rRNA. This chain is Ribosomal RNA small subunit methyltransferase G, found in Acidiphilium cryptum (strain JF-5).